The chain runs to 211 residues: Phosphoribosyl-dephospho-CoA transferase (211 aa).

Active-site residues include aspartate 136 and aspartate 138.

This sequence belongs to the MdcG family.

The enzyme catalyses apo-[malonate decarboxylase ACP] + 2'-(5''-triphospho-alpha-D-ribosyl)-3'-dephospho-CoA = holo-[malonate decarboxylase ACP] + diphosphate. Functionally, transfers 2'-(5-triphosphoribosyl)-3'-dephosphocoenzyme-A to the apo-[acyl-carrier-protein] of the malonate decarboxylase to yield holo-[acyl-carrier-protein]. The polypeptide is Phosphoribosyl-dephospho-CoA transferase (Pseudomonas syringae pv. tomato (strain ATCC BAA-871 / DC3000)).